The chain runs to 307 residues: Nucleotide-binding protein AAur_2084 (307 aa).

Residues methionine 1 to proline 21 are disordered. Glycine 30 to serine 37 is a binding site for ATP. A GTP-binding site is contributed by aspartate 81–serine 84.

It belongs to the RapZ-like family.

Functionally, displays ATPase and GTPase activities. In Paenarthrobacter aurescens (strain TC1), this protein is Nucleotide-binding protein AAur_2084.